The chain runs to 241 residues: Methylthioribulose-1-phosphate dehydratase (241 aa).

Cys102 provides a ligand contact to substrate. Zn(2+) contacts are provided by His120, His122, and His199.

The protein belongs to the aldolase class II family. MtnB subfamily. Zn(2+) is required as a cofactor.

Its subcellular location is the cytoplasm. The enzyme catalyses 5-(methylsulfanyl)-D-ribulose 1-phosphate = 5-methylsulfanyl-2,3-dioxopentyl phosphate + H2O. Its pathway is amino-acid biosynthesis; L-methionine biosynthesis via salvage pathway; L-methionine from S-methyl-5-thio-alpha-D-ribose 1-phosphate: step 2/6. Functionally, catalyzes the dehydration of methylthioribulose-1-phosphate (MTRu-1-P) into 2,3-diketo-5-methylthiopentyl-1-phosphate (DK-MTP-1-P). The polypeptide is Methylthioribulose-1-phosphate dehydratase (Coprinopsis cinerea (strain Okayama-7 / 130 / ATCC MYA-4618 / FGSC 9003) (Inky cap fungus)).